We begin with the raw amino-acid sequence, 329 residues long: Serine/threonine-protein phosphatase PP2A catalytic subunit (329 aa).

The interval 1–25 (MDNNMEIDAARSPEPHHLSPTTDPG) is disordered. A compositionally biased stretch (basic and acidic residues) spans 8-17 (DAARSPEPHH). 4 residues coordinate Mn(2+): D77, H79, D105, and N137. The active-site Proton donor is H138. Positions 187 and 261 each coordinate Mn(2+). The residue at position 329 (L329) is a Leucine methyl ester.

Belongs to the PPP phosphatase family. PP-2A subfamily. The cofactor is Mn(2+).

It catalyses the reaction O-phospho-L-seryl-[protein] + H2O = L-seryl-[protein] + phosphate. It carries out the reaction O-phospho-L-threonyl-[protein] + H2O = L-threonyl-[protein] + phosphate. Functionally, involved in hyphal morphogenesis. This chain is Serine/threonine-protein phosphatase PP2A catalytic subunit (pphA), found in Emericella nidulans (strain FGSC A4 / ATCC 38163 / CBS 112.46 / NRRL 194 / M139) (Aspergillus nidulans).